The sequence spans 270 residues: Tryptophan synthase alpha chain (270 aa).

Active-site proton acceptor residues include E49 and D60.

It belongs to the TrpA family. In terms of assembly, tetramer of two alpha and two beta chains.

It catalyses the reaction (1S,2R)-1-C-(indol-3-yl)glycerol 3-phosphate + L-serine = D-glyceraldehyde 3-phosphate + L-tryptophan + H2O. It functions in the pathway amino-acid biosynthesis; L-tryptophan biosynthesis; L-tryptophan from chorismate: step 5/5. Its function is as follows. The alpha subunit is responsible for the aldol cleavage of indoleglycerol phosphate to indole and glyceraldehyde 3-phosphate. This Pseudomonas fluorescens (strain Pf0-1) protein is Tryptophan synthase alpha chain.